A 503-amino-acid chain; its full sequence is Probable cytosol aminopeptidase (503 aa).

Positions 270 and 275 each coordinate Mn(2+). Residue K282 is part of the active site. Mn(2+)-binding residues include D293, D352, and E354. Residue R356 is part of the active site.

Belongs to the peptidase M17 family. Mn(2+) is required as a cofactor.

Its subcellular location is the cytoplasm. It carries out the reaction Release of an N-terminal amino acid, Xaa-|-Yaa-, in which Xaa is preferably Leu, but may be other amino acids including Pro although not Arg or Lys, and Yaa may be Pro. Amino acid amides and methyl esters are also readily hydrolyzed, but rates on arylamides are exceedingly low.. The enzyme catalyses Release of an N-terminal amino acid, preferentially leucine, but not glutamic or aspartic acids.. Its function is as follows. Presumably involved in the processing and regular turnover of intracellular proteins. Catalyzes the removal of unsubstituted N-terminal amino acids from various peptides. This is Probable cytosol aminopeptidase from Salmonella typhi.